The primary structure comprises 362 residues: Inactive 2'-5' oligoadenylate synthetase 1C (362 aa).

It belongs to the 2-5A synthase family. In terms of tissue distribution, expressed at highest level in brain with lesser amounts in spleen, kidney, stomach, liver, intestine, ovary, skin and testis. Not detected in lung, thymus, heart and uterus.

Its function is as follows. Does not have 2'-5'-OAS activity, but can bind double-stranded RNA. In Mus musculus (Mouse), this protein is Inactive 2'-5' oligoadenylate synthetase 1C.